The sequence spans 129 residues: Small ribosomal subunit protein uS11 (129 aa).

Belongs to the universal ribosomal protein uS11 family. As to quaternary structure, part of the 30S ribosomal subunit. Interacts with proteins S7 and S18. Binds to IF-3.

Functionally, located on the platform of the 30S subunit, it bridges several disparate RNA helices of the 16S rRNA. Forms part of the Shine-Dalgarno cleft in the 70S ribosome. This Pasteurella multocida (strain Pm70) protein is Small ribosomal subunit protein uS11.